The following is a 1197-amino-acid chain: Envelopment polyprotein (1197 aa).

The signal sequence occupies residues 1 to 16 (MYVLLTILTSVLVCEA). Topologically, residues 17 to 130 (IIRVSLSSTR…RDAKQIGRKT (114 aa)) are cytoplasmic. The internal signal sequence for glycoprotein N stretch occupies residues 131-153 (MAGIAMTVLPALAVFALAPVVFA). Topologically, residues 154–582 (EDPHLRNRPG…GLINYQCHTA (429 aa)) are lumenal. Cystine bridges form between cysteine 179-cysteine 188, cysteine 229-cysteine 239, cysteine 250-cysteine 281, cysteine 271-cysteine 284, cysteine 304-cysteine 456, cysteine 322-cysteine 332, cysteine 374-cysteine 434, cysteine 402-cysteine 413, cysteine 420-cysteine 425, cysteine 479-cysteine 482, cysteine 486-cysteine 556, and cysteine 506-cysteine 511. Residues 583–603 (LSAFVVVFVFSSIAIICLAIL) traverse the membrane as a helical segment. Over 604–673 (YRVLKCLKIA…APIPRHAPIP (70 aa)) the chain is Cytoplasmic. The golgi retention signal stretch occupies residues 608–650 (KCLKIAPRKVLNPLMWITAFIRWIYKKMVARVADNINQVNREI). The interval 646–650 (VNREI) is important for correct targeting of the glycoproteins to the Golgi complex but not for heterodimerization. The interval 675–690 (YSTYLMLLLIVSYASA) is internal signal sequence for glycoprotein C. Disulfide bonds link cysteine 691-cysteine 731, cysteine 704-cysteine 713, cysteine 756-cysteine 852, cysteine 771-cysteine 965, cysteine 777-cysteine 825, cysteine 783-cysteine 832, cysteine 788-cysteine 814, cysteine 818-cysteine 823, cysteine 934-cysteine 947, cysteine 1029-cysteine 1101, cysteine 1039-cysteine 1042, and cysteine 1049-cysteine 1083. At 691–1159 (CSELIQASSR…MSWFGGPLKT (469 aa)) the chain is on the lumenal side. The fusion loop stretch occupies residues 777-783 (CHLVGEC). The N-linked (GlcNAc...) asparagine; by host glycan is linked to asparagine 794. Residues 819–830 (GGWGCGCFNVNP) are fusion loop. Asparagine 1035 carries an N-linked (GlcNAc...) asparagine; by host glycan. An N-linked (GlcNAc...) asparagine; by host glycan is attached at asparagine 1077. A helical membrane pass occupies residues 1160–1180 (ILLICLYVALSIGLFFLLIYL). The Cytoplasmic segment spans residues 1181–1197 (GGTGLSKMWLAATKKAS).

Belongs to the phlebovirus envelope glycoprotein family. In terms of assembly, heterodimer with glycoprotein C. Homotrimer (postfusion). Interacts with nucleocapsid protein N and with the polymerase L in order to package them into virus particles. Interacts with host E3 ubiquitin-protein ligase UBR4; this interaction is important for viral RNA production. Interacts with host LRP1; this interaction facilitates virus entry into the host cell. As to quaternary structure, heterodimer with glycoprotein C. In terms of processing, specific enzymatic cleavages in vivo yield mature proteins including NSm protein, Glycoprotein C, and Glycoprotein N. Glycosylated. The glycans can attach to host CD209/DC-SIGN, and may play a role in virus entry into dendritic cells. Post-translationally, palmitoylated.

Its subcellular location is the virion membrane. It localises to the host Golgi apparatus membrane. The protein resides in the host endoplasmic reticulum membrane. The protein localises to the host mitochondrion outer membrane. It is found in the host Golgi apparatus. Its subcellular location is the virion. In terms of biological role, structural component of the virion that interacts with glycoprotein C. It shields the hydrophobic fusion loops of the glycoprotein C, preventing premature fusion. The glycoprotein protrusions are arranged on an icosahedral lattice, with T=12 triangulation. They are able to attach the virion to the host cell receptor CD209/DC-SIGN and to promote fusion of membranes with the late endosome after endocytosis of the virion. Plays a role in the packaging of ribonucleoproteins and polymerase during virus assembly. Its function is as follows. Structural component of the virion that interacts with glycoprotein N. Acts as a class II fusion protein that is activated upon acidification and subsequent repositioning of the glycoprotein N. The glycoprotein protrusions are arranged on an icosahedral lattice, with T=12 triangulation. They are able to attach the virion to the host cell receptor CD209/DC-SIGN and to promote fusion of membranes with the late endosome after endocytosis of the virion. Functionally, plays a role in the inhibition of virus-induced apoptosis. Plays a role for virus dissemination in vertebrates. Plays a role for virus dissemination in mosquitoes. May act as a structural virion protein in insects. This is Envelopment polyprotein (GP) from Rift valley fever virus (strain ZH-548 M12) (RVFV).